The sequence spans 466 residues: Cytochrome c-552 (466 aa).

A signal peptide spans 1-27 (MVRILTKKSFALSALVAASLMASGAMA). His-87 contacts heme c. Heme contacts are provided by Cys-115, Cys-118, and Lys-119. Cys-153, Cys-156, His-157, Cys-195, Cys-198, and His-199 together coordinate heme c. Ca(2+)-binding residues include Glu-201, Tyr-202, Lys-250, and Gln-252. Tyr-202 provides a ligand contact to substrate. His-253 provides a ligand contact to substrate. His-264, Cys-271, Cys-274, His-275, His-290, Cys-303, Cys-306, His-307, and His-382 together coordinate heme c.

Belongs to the cytochrome c-552 family. Ca(2+) serves as cofactor. The cofactor is heme c.

It is found in the periplasm. It carries out the reaction 6 Fe(III)-[cytochrome c] + NH4(+) + 2 H2O = 6 Fe(II)-[cytochrome c] + nitrite + 8 H(+). It functions in the pathway nitrogen metabolism; nitrate reduction (assimilation). Its function is as follows. Catalyzes the reduction of nitrite to ammonia, consuming six electrons in the process. In Shewanella woodyi (strain ATCC 51908 / MS32), this protein is Cytochrome c-552.